Consider the following 189-residue polypeptide: Large ribosomal subunit protein bL9 (189 aa).

The protein belongs to the bacterial ribosomal protein bL9 family.

Its function is as follows. Binds to the 23S rRNA. This is Large ribosomal subunit protein bL9 from Beijerinckia indica subsp. indica (strain ATCC 9039 / DSM 1715 / NCIMB 8712).